The following is a 603-amino-acid chain: MTMYTTMTTLTLTPLILPILTTLINPNKKNSYPHYVKSIIASTFIISLFPTTMFMCLDQEAIISNWHWATTQTTQLSLSFKLDYFSMTFIPVALFVTWAIMEFSLWYMNSDPNINQFFKYLLIFLITMLILVTANNLFQLFIGWEGVGIMSFLLISWWYARTDANTAAIQAILYNRIGDIGFILALAWFLLHSNSWDPQQMVLLSTNPSLTPLLGFLLAAAGKSAQLGLHPWLPSAMEGPTPVSALLHSSTMVVAGVFLLIRFHPLAENNPLIQTLTLCLGAITTLFAAICALTQNDIKKIVAFSTSSQLGLMMVTIGINQPHLAFLHICTHAFFKAMLFMCSGSIIHNLNNEQDIRKMGGLLKTMPLTSTSLIIGSLALAGMPFLTGFYSKDLIIETANMSYMNAWALSITLIATSLTSAYSTRMILLTLMGQPRFPTLTNINENNPTLLNPIKRLTIGSLFAGFFITNNILPMSTSQMTIPLYLKLTALSVTFLGLLTALDLNYLTNKLKMKSPPYTFYFSNMLGFYPNIMHRSIPYLGLLTSQNLPLLLLDLTWLEKLLPKTISQYQVSASITTSTQKGMIKLYFLSFLFPLILTLLLIM.

16 consecutive transmembrane segments (helical) span residues 4–24 (YTTMTTLTLTPLILPILTTLI), 38–58 (SIIASTFIISLFPTTMFMCLD), 87–107 (MTFIPVALFVTWAIMEFSLWY), 122–142 (LIFLITMLILVTANNLFQLFI), 144–160 (WEGVGIMSFLLISWWYA), 171–191 (AILYNRIGDIGFILALAWFLL), 211–233 (TPLLGFLLAAAGKSAQLGLHPWL), 241–261 (TPVSALLHSSTMVVAGVFLLI), 272–292 (LIQTLTLCLGAITTLFAAICA), 301–320 (IVAFSTSSQLGLMMVTIGIN), 325–347 (AFLHICTHAFFKAMLFMCSGSII), 370–390 (STSLIIGSLALAGMPFLTGFY), 407–429 (WALSITLIATSLTSAYSTRMILL), 457–477 (LTIGSLFAGFFITNNILPMST), 482–502 (IPLYLKLTALSVTFLGLLTAL), and 583–603 (MIKLYFLSFLFPLILTLLLIM).

This sequence belongs to the complex I subunit 5 family. Core subunit of respiratory chain NADH dehydrogenase (Complex I) which is composed of 45 different subunits.

The protein resides in the mitochondrion inner membrane. The catalysed reaction is a ubiquinone + NADH + 5 H(+)(in) = a ubiquinol + NAD(+) + 4 H(+)(out). Core subunit of the mitochondrial membrane respiratory chain NADH dehydrogenase (Complex I) which catalyzes electron transfer from NADH through the respiratory chain, using ubiquinone as an electron acceptor. Essential for the catalytic activity and assembly of complex I. This Pan paniscus (Pygmy chimpanzee) protein is NADH-ubiquinone oxidoreductase chain 5 (MT-ND5).